A 259-amino-acid chain; its full sequence is Expansin-B4 (259 aa).

A signal peptide spans 1–23 (MASSQRYFALLALFAVSLKFCYC). Asn25 carries N-linked (GlcNAc...) asparagine glycosylation. An Expansin-like EG45 domain is found at 51-161 (GGACGYGSAV…KRAACLYRGT (111 aa)). 3 disulfide bridges follow: Cys54/Cys83, Cys86/Cys156, and Cys91/Cys97. Residues 174–255 (YYISFVVEYE…NWKPDESYRS (82 aa)) enclose the Expansin-like CBD domain.

This sequence belongs to the expansin family. Expansin B subfamily.

Its subcellular location is the secreted. It is found in the cell wall. It localises to the membrane. May cause loosening and extension of plant cell walls by disrupting non-covalent bonding between cellulose microfibrils and matrix glucans. No enzymatic activity has been found. This Arabidopsis thaliana (Mouse-ear cress) protein is Expansin-B4 (EXPB4).